Reading from the N-terminus, the 132-residue chain is Fluoride-specific ion channel FluC (132 aa).

Helical transmembrane passes span Val-6–Val-26, Gly-41–Ile-61, Phe-73–Tyr-93, and Ala-104–Trp-124. Gly-80 and Thr-83 together coordinate Na(+).

This sequence belongs to the fluoride channel Fluc/FEX (TC 1.A.43) family.

It localises to the cell inner membrane. The enzyme catalyses fluoride(in) = fluoride(out). Its activity is regulated as follows. Na(+) is not transported, but it plays an essential structural role and its presence is essential for fluoride channel function. In terms of biological role, fluoride-specific ion channel. Important for reducing fluoride concentration in the cell, thus reducing its toxicity. The chain is Fluoride-specific ion channel FluC from Hydrogenovibrio crunogenus (strain DSM 25203 / XCL-2) (Thiomicrospira crunogena).